A 309-amino-acid polypeptide reads, in one-letter code: Porphobilinogen deaminase (309 aa).

The residue at position 234 (Cys-234) is an S-(dipyrrolylmethanemethyl)cysteine.

It belongs to the HMBS family. In terms of assembly, monomer. Dipyrromethane serves as cofactor.

It carries out the reaction 4 porphobilinogen + H2O = hydroxymethylbilane + 4 NH4(+). It participates in porphyrin-containing compound metabolism; protoporphyrin-IX biosynthesis; coproporphyrinogen-III from 5-aminolevulinate: step 2/4. Tetrapolymerization of the monopyrrole PBG into the hydroxymethylbilane pre-uroporphyrinogen in several discrete steps. The sequence is that of Porphobilinogen deaminase (hemC) from Mycobacterium bovis (strain ATCC BAA-935 / AF2122/97).